We begin with the raw amino-acid sequence, 654 residues long: Threonine--tRNA ligase (654 aa).

One can recognise a TGS domain in the interval Met1 to Ala63. The catalytic stretch occupies residues Asp248 to Pro546. Residues Cys342, His393, and His523 each contribute to the Zn(2+) site.

The protein belongs to the class-II aminoacyl-tRNA synthetase family. As to quaternary structure, homodimer. It depends on Zn(2+) as a cofactor.

It is found in the cytoplasm. The catalysed reaction is tRNA(Thr) + L-threonine + ATP = L-threonyl-tRNA(Thr) + AMP + diphosphate + H(+). Its function is as follows. Catalyzes the attachment of threonine to tRNA(Thr) in a two-step reaction: L-threonine is first activated by ATP to form Thr-AMP and then transferred to the acceptor end of tRNA(Thr). Also edits incorrectly charged L-seryl-tRNA(Thr). The polypeptide is Threonine--tRNA ligase (Lactiplantibacillus plantarum (strain ATCC BAA-793 / NCIMB 8826 / WCFS1) (Lactobacillus plantarum)).